Consider the following 170-residue polypeptide: MITYDDEVVCAPRAGTLYDVLELILDRGMVIDVFVRVSLVGIEILKVDARIVVASVDTYLRFAEACNRLDLEHDVRSKTVPEMFGSPMAKTVGRAGARRTARSLTDKVRDVLTPEHEHEEEPEEAEDRPRAGAERGRSTQRPRSRPAARPRDEDDRPRSRPRRRTEEEDR.

The segment at 86–170 (SPMAKTVGRA…PRRRTEEEDR (85 aa)) is disordered. Composition is skewed to basic and acidic residues over residues 104-119 (LTDK…HEHE) and 127-137 (DRPRAGAERGR). The span at 138–148 (STQRPRSRPAA) shows a compositional bias: basic residues. Residues 149–170 (RPRDEDDRPRSRPRRRTEEEDR) are compositionally biased toward basic and acidic residues.

It belongs to the gas vesicle GvpA family. The gas vesicle shell is 2 nm thick and consists of a single layer of this protein. It forms helical ribs nearly perpendicular to the long axis of the vesicle.

Its subcellular location is the gas vesicle shell. In terms of biological role, gas vesicles are hollow, gas filled proteinaceous nanostructures found in some microorganisms. During planktonic growth they allow positioning of the organism at a favorable depth for light or nutrient acquisition. GvpA forms the protein shell. It is not clear what function GVs perform in soil bacteria. The protein is Gas vesicle protein A2 of Streptomyces coelicolor (strain ATCC BAA-471 / A3(2) / M145).